The sequence spans 158 residues: Urease accessory protein UreE (158 aa).

It belongs to the UreE family.

It is found in the cytoplasm. Its function is as follows. Involved in urease metallocenter assembly. Binds nickel. Probably functions as a nickel donor during metallocenter assembly. The polypeptide is Urease accessory protein UreE (Microcystis aeruginosa (strain NIES-843 / IAM M-2473)).